The sequence spans 349 residues: UPF0283 membrane protein Ent638_2153 (349 aa).

3 helical membrane passes run 70-90 (MVTAGLTLFGISVVGQGVQWT), 99-119 (WVALGGCAAGALIIGAGVGSV), and 213-233 (ESTLMIAVSPLALVDMAFIAW).

It belongs to the UPF0283 family.

Its subcellular location is the cell inner membrane. This is UPF0283 membrane protein Ent638_2153 from Enterobacter sp. (strain 638).